Consider the following 330-residue polypeptide: AP-1-like transcription factor YAP3 (330 aa).

Residues 114-150 (SYSNTNYFSKNNGISPSSRSPSVAHNENVPDDSKAKK) form a disordered region. The segment covering 121–138 (FSKNNGISPSSRSPSVAH) has biased composition (polar residues). Phosphoserine is present on Ser-135. The region spanning 144 to 207 (DDSKAKKKAQ…TEINAENRLL (64 aa)) is the bZIP domain. A basic motif region spans residues 147-168 (KAKKKAQNRAAQKAFRERKEAR). Residues 172–207 (LQDKLLESERNRQSLLKEIEELRKANTEINAENRLL) are leucine-zipper.

It belongs to the bZIP family. YAP subfamily. Homodimer. Interacts with the C-terminal, cytoplasmic tail of the multidrug resistance ABC transporter PDR5.

Its subcellular location is the cytoplasm. It is found in the nucleus. Its function is as follows. Transcription activator involved in the regulation of genes expressed in response to environmental changes. When overexpressed it activates transcription of the multidrug resistance ABC transporter PDR5, thus conferring resistance to the fungicide fluconazole (FCZ) and cycloheximide. When overexpressed, it also confers, independent of PDR5, increased resistance to 4-nitroquinoline-N-oxide (4-NQO). Preferentially binds 5'-TTACTAA-3'. This Saccharomyces cerevisiae (strain ATCC 204508 / S288c) (Baker's yeast) protein is AP-1-like transcription factor YAP3 (YAP3).